Here is a 177-residue protein sequence, read N- to C-terminus: Ribulose bisphosphate carboxylase small subunit, chloroplastic 2 (177 aa).

Residues 1 to 56 (MASSMMASTAAVARAGPAQSNMVAPFNGLRSSVAFPATRKANKNLSTLPSNGGKVS) constitute a chloroplast transit peptide.

The protein belongs to the RuBisCO small chain family. As to quaternary structure, heterohexadecamer of 8 large and 8 small subunits.

It localises to the plastid. It is found in the chloroplast. RuBisCO catalyzes two reactions: the carboxylation of D-ribulose 1,5-bisphosphate, the primary event in carbon dioxide fixation, as well as the oxidative fragmentation of the pentose substrate. Both reactions occur simultaneously and in competition at the same active site. Although the small subunit is not catalytic it is essential for maximal activity. This Lemna gibba (Swollen duckweed) protein is Ribulose bisphosphate carboxylase small subunit, chloroplastic 2.